The sequence spans 180 residues: ATP-dependent protease subunit HslV (180 aa).

Residue Thr7 is part of the active site. Positions 163, 166, and 169 each coordinate Na(+).

The protein belongs to the peptidase T1B family. HslV subfamily. A double ring-shaped homohexamer of HslV is capped on each side by a ring-shaped HslU homohexamer. The assembly of the HslU/HslV complex is dependent on binding of ATP.

Its subcellular location is the cytoplasm. The catalysed reaction is ATP-dependent cleavage of peptide bonds with broad specificity.. Its activity is regulated as follows. Allosterically activated by HslU binding. Functionally, protease subunit of a proteasome-like degradation complex believed to be a general protein degrading machinery. The polypeptide is ATP-dependent protease subunit HslV (Alcanivorax borkumensis (strain ATCC 700651 / DSM 11573 / NCIMB 13689 / SK2)).